The primary structure comprises 341 residues: Short chain dehydrogenase FGM9 (341 aa).

NADP(+) is bound by residues leucine 38, lysine 63, aspartate 88, and asparagine 114. Active-site proton donor residues include serine 167 and tyrosine 200. NADP(+) contacts are provided by tyrosine 200 and lysine 204. The Lowers pKa of active site Tyr role is filled by lysine 204.

This sequence belongs to the short-chain dehydrogenases/reductases (SDR) family.

It participates in secondary metabolite biosynthesis. Its function is as follows. Short chain dehydrogenase; part of the Fg3_54/C64 gene cluster that mediates the biosynthesis of the octapeptide fusaoctaxin A, a virulence factor that is required for cell-to-cell invasiveness of plant host. The 2 nonribosomal peptide synthetases NRPS9 and NRPS5 form an assembly line which likely utilizes GABA as a starter unit (loaded on the unique module M1 of NRPS9) and sequentially incorporates seven extender units composed of the residues L-Ala, L-allo-Ile, L-Ser, L-Val, L-Ser, L-Leu and L-Leu, respectively. During the process, each of the residues that are tethered on modules M3-M7 of NRPS5 containing an E domain can undergo an epimerization reaction to produce a D-configuration before the transpeptidation reaction occurs. The elongation of the peptidyl chain might be terminated by module M8-mediated L-Leu incorporation, followed by R domain-catalyzed 4 electron reduction to release the resulting octapeptide from the assembly line as an alcohol. Fusaoctaxin A is cleaved by the cluster specific ABC transporter FGM5 to the pentapeptide fusapentaxin A and the tripeptide fusatrixin A. The other enzymes from the cluster, FGM1, FGM2, FGM3 and FGM9 seem not to be involved in the biosynthesis of fusaoctaxin A and their functions have still to be determined. The polypeptide is Short chain dehydrogenase FGM9 (Gibberella zeae (strain ATCC MYA-4620 / CBS 123657 / FGSC 9075 / NRRL 31084 / PH-1) (Wheat head blight fungus)).